Here is a 259-residue protein sequence, read N- to C-terminus: Pre-mRNA-splicing factor CWC24 (259 aa).

Residues 1 to 67 (MFRKRLVNKS…HENEGKLQKK (67 aa)) form a disordered region. A compositionally biased stretch (basic and acidic residues) spans 25–39 (FSEEKLVASDEEKGS). S33 is modified (phosphoserine). A compositionally biased stretch (polar residues) spans 47–57 (KSGNSRTLQLS). Residues 58 to 67 (HENEGKLQKK) show a composition bias toward basic and acidic residues. S105 bears the Phosphoserine mark. The segment at 138-166 (DFQPDVCKDYKQTGYCGYGDSCKFLHSRD) adopts a C3H1-type zinc-finger fold. The RING-type zinc-finger motif lies at 199–237 (CTLCKEDYKSPVVTNCGHYFCGSCFAKDMKKGTKCFICH).

Belongs to the CWC24 family. Belongs to the CWC complex (or CEF1-associated complex), a spliceosome sub-complex reminiscent of a late-stage spliceosome composed of the U2, U5 and U6 snRNAs and at least BUD13, BUD31, BRR2, CDC40, CEF1, CLF1, CUS1, CWC2, CWC15, CWC21, CWC22, CWC23, CWC24, CWC25, CWC27, ECM2, HSH155, IST3, ISY1, LEA1, MSL1, NTC20, PRP8, PRP9, PRP11, PRP19, PRP21, PRP22, PRP45, PRP46, SLU7, SMB1, SMD1, SMD2, SMD3, SMX2, SMX3, SNT309, SNU114, SPP2, SYF1, SYF2, RSE1 and YJU2.

It localises to the nucleus. Its function is as follows. Involved in pre-mRNA splicing. The polypeptide is Pre-mRNA-splicing factor CWC24 (CWC24) (Saccharomyces cerevisiae (strain ATCC 204508 / S288c) (Baker's yeast)).